We begin with the raw amino-acid sequence, 606 residues long: Polyphenol oxidase A1, chloroplastic (606 aa).

Residues 1–92 (MTSISALSFI…TLATNPSALA (92 aa)) constitute a chloroplast transit peptide. The tract at residues 32–63 (KQHQSSKLRKPKRQVTCSSNNNQNNPKEEQEL) is disordered. Basic residues predominate over residues 35–44 (QSSKLRKPKR). 2 disulfides stabilise this stretch: cysteine 103–cysteine 121 and cysteine 120–cysteine 182. Residues histidine 181, histidine 202, histidine 211, histidine 333, histidine 337, and histidine 367 each coordinate Cu cation. Residues 185–202 (CDGAYSQIGFPDLKLQVH) constitute a cross-link (2'-(S-cysteinyl)-histidine (Cys-His)).

It belongs to the tyrosinase family. Cu(2+) serves as cofactor.

The protein localises to the plastid. It is found in the chloroplast thylakoid lumen. It carries out the reaction 2 catechol + O2 = 2 1,2-benzoquinone + 2 H2O. Its function is as follows. Catalyzes the oxidation of mono- and o-diphenols to o-diquinones. The sequence is that of Polyphenol oxidase A1, chloroplastic from Vicia faba (Broad bean).